A 410-amino-acid chain; its full sequence is Peptidase T (410 aa).

Residue His-79 participates in Zn(2+) binding. Asp-81 is an active-site residue. Zn(2+) is bound at residue Asp-142. Glu-176 functions as the Proton acceptor in the catalytic mechanism. Zn(2+)-binding residues include Glu-177, Asp-199, and His-381.

This sequence belongs to the peptidase M20B family. The cofactor is Zn(2+).

Its subcellular location is the cytoplasm. The enzyme catalyses Release of the N-terminal residue from a tripeptide.. Its function is as follows. Cleaves the N-terminal amino acid of tripeptides. The sequence is that of Peptidase T from Listeria innocua serovar 6a (strain ATCC BAA-680 / CLIP 11262).